The chain runs to 2243 residues: Zinc finger FYVE domain-containing protein 26 homolog (2243 aa).

Disordered stretches follow at residues 386 to 416 (SQRKGEDGENDEEDDEQYVDDDVASPPRPTA) and 514 to 556 (KKKA…GKAS). The segment covering 393-408 (GENDEEDDEQYVDDDV) has biased composition (acidic residues). Tyr-403 carries the phosphotyrosine modification. The span at 517 to 528 (ASSDDESRERSN) shows a compositional bias: basic and acidic residues. Residues 534–543 (NRRKARRQRR) are compositionally biased toward basic residues. One copy of the LRR 1 repeat lies at 617-644 (KKIIETFHLEHSQLNRELHFMEQQQLVK). The residue at position 1424 (Ser-1424) is a Phosphoserine. The FYVE-type zinc-finger motif lies at 1444 to 1500 (DEEASHCMCCRRAAFTMLMRRHHCRRCGRVVCYACSTHRIRIPELYDELEVRICNDC). Positions 1450, 1453, 1467, 1470, 1475, 1478, 1497, and 1500 each coordinate Zn(2+). The segment at 1505-1534 (TPAKDQGDGTSSERSAISGQVSKSSGRSDS) is disordered. A compositionally biased stretch (polar residues) spans 1512–1534 (DGTSSERSAISGQVSKSSGRSDS). One copy of the LRR 2 repeat lies at 1887 to 1912 (YPQLANGGLNVLMDELQQLDDAQFTA).

The protein belongs to the ZFYVE26 family.

In terms of biological role, phosphatidylinositol 3-phosphate (PtdIns[3]P)-binding protein. Involved in autophagy. The protein is Zinc finger FYVE domain-containing protein 26 homolog of Drosophila melanogaster (Fruit fly).